Consider the following 333-residue polypeptide: Holliday junction branch migration complex subunit RuvB (333 aa).

A large ATPase domain (RuvB-L) region spans residues 1–182 (MDERLLSGES…FGVLSRLEYY (182 aa)). ATP-binding positions include leucine 21, arginine 22, glycine 63, lysine 66, threonine 67, threonine 68, 129-131 (EDF), arginine 172, tyrosine 182, and arginine 219. Threonine 67 provides a ligand contact to Mg(2+). The small ATPAse domain (RuvB-S) stretch occupies residues 183-253 (TVDQLSAIVE…ITQMALELLQ (71 aa)). The segment at 256–333 (KLGLDHIDHK…EHFGMEMPKV (78 aa)) is head domain (RuvB-H). 2 residues coordinate DNA: arginine 311 and arginine 316.

The protein belongs to the RuvB family. As to quaternary structure, homohexamer. Forms an RuvA(8)-RuvB(12)-Holliday junction (HJ) complex. HJ DNA is sandwiched between 2 RuvA tetramers; dsDNA enters through RuvA and exits via RuvB. An RuvB hexamer assembles on each DNA strand where it exits the tetramer. Each RuvB hexamer is contacted by two RuvA subunits (via domain III) on 2 adjacent RuvB subunits; this complex drives branch migration. In the full resolvosome a probable DNA-RuvA(4)-RuvB(12)-RuvC(2) complex forms which resolves the HJ.

The protein resides in the cytoplasm. It carries out the reaction ATP + H2O = ADP + phosphate + H(+). In terms of biological role, the RuvA-RuvB-RuvC complex processes Holliday junction (HJ) DNA during genetic recombination and DNA repair, while the RuvA-RuvB complex plays an important role in the rescue of blocked DNA replication forks via replication fork reversal (RFR). RuvA specifically binds to HJ cruciform DNA, conferring on it an open structure. The RuvB hexamer acts as an ATP-dependent pump, pulling dsDNA into and through the RuvAB complex. RuvB forms 2 homohexamers on either side of HJ DNA bound by 1 or 2 RuvA tetramers; 4 subunits per hexamer contact DNA at a time. Coordinated motions by a converter formed by DNA-disengaged RuvB subunits stimulates ATP hydrolysis and nucleotide exchange. Immobilization of the converter enables RuvB to convert the ATP-contained energy into a lever motion, pulling 2 nucleotides of DNA out of the RuvA tetramer per ATP hydrolyzed, thus driving DNA branch migration. The RuvB motors rotate together with the DNA substrate, which together with the progressing nucleotide cycle form the mechanistic basis for DNA recombination by continuous HJ branch migration. Branch migration allows RuvC to scan DNA until it finds its consensus sequence, where it cleaves and resolves cruciform DNA. The chain is Holliday junction branch migration complex subunit RuvB from Bacillus cereus (strain Q1).